Consider the following 207-residue polypeptide: Testis-expressed protein 35 (207 aa).

The stretch at 43–79 (RKGMTRELKNELREVREQLTEKMEEIKQIKDIMDKDF) forms a coiled coil.

In terms of tissue distribution, testis-specific. Expressed during spermatogenesis.

The protein resides in the nucleus. In Mus musculus (Mouse), this protein is Testis-expressed protein 35 (Tex35).